Reading from the N-terminus, the 427-residue chain is GTPase Obg (427 aa).

The region spanning 1–158 (MFVDIAKIYV…LWVILELKVL (158 aa)) is the Obg domain. The OBG-type G domain occupies 159-330 (ADVGLIGYPN…VLKRAYELLK (172 aa)). GTP-binding positions include 165–172 (GYPNVGKS), 190–194 (FTTKY), 212–215 (DIPG), 282–285 (NKMD), and 311–313 (SAA). Mg(2+)-binding residues include S172 and T192. The OCT domain occupies 347 to 427 (FVYYKKKDVK…ILDVEFEYYE (81 aa)).

It belongs to the TRAFAC class OBG-HflX-like GTPase superfamily. OBG GTPase family. Monomer. The cofactor is Mg(2+).

It is found in the cytoplasm. Functionally, an essential GTPase which binds GTP, GDP and possibly (p)ppGpp with moderate affinity, with high nucleotide exchange rates and a fairly low GTP hydrolysis rate. Plays a role in control of the cell cycle, stress response, ribosome biogenesis and in those bacteria that undergo differentiation, in morphogenesis control. In Caldicellulosiruptor saccharolyticus (strain ATCC 43494 / DSM 8903 / Tp8T 6331), this protein is GTPase Obg.